Here is a 287-residue protein sequence, read N- to C-terminus: Pyridoxal kinase PdxY (287 aa).

Substrate contacts are provided by residues S9 and 44–45 (MQ). 4 residues coordinate ATP: D111, A142, E147, and K180. D221 is a binding site for substrate.

It belongs to the pyridoxine kinase family. PdxY subfamily. Homodimer. The cofactor is Mg(2+).

The catalysed reaction is pyridoxal + ATP = pyridoxal 5'-phosphate + ADP + H(+). It functions in the pathway cofactor metabolism; pyridoxal 5'-phosphate salvage; pyridoxal 5'-phosphate from pyridoxal: step 1/1. Its function is as follows. Pyridoxal kinase involved in the salvage pathway of pyridoxal 5'-phosphate (PLP). Catalyzes the phosphorylation of pyridoxal to PLP. The sequence is that of Pyridoxal kinase PdxY from Burkholderia pseudomallei (strain K96243).